Consider the following 381-residue polypeptide: MPKHPLTIALVAGETSGDILGAGLIRALKEKHPDARFVGVAGPLMQSEGCEAWYEMEELAVMGIVEVLGRLRRLLHIRRDLTRRFTALKPDVFVGIDAPDFNITLEGRLKQQGIRTIHYVSPSVWAWRQKRVFKIGRATDLVLAFLPFEKAFYDRFNVPCRFIGHTMADAMPIVPDKQAARRELGIAPQALCLALLPGSRSAEVEMLSADFLKTAMLLREKYPQLEIVVPLVNPRRRAQFEAIKAEVAADLPMHLLDGKGREAMLASDAALLASGTAALECMLAKCPMVVGYRMKPFTFWLAKRLVKTDYVSLPNLLAGRELVPELLQDECQPQRLAAALEPLLAQGETRDTLLATFAELHHQIRWNADEQAAAAVLELCR.

This sequence belongs to the LpxB family.

The enzyme catalyses 2-N,3-O-bis[(3R)-3-hydroxytetradecanoyl]-alpha-D-glucosaminyl 1-phosphate + UDP-2-N,3-O-bis[(3R)-3-hydroxytetradecanoyl]-alpha-D-glucosamine = lipid A disaccharide (E. coli) + UDP + H(+). It carries out the reaction a lipid X + a UDP-2-N,3-O-bis[(3R)-3-hydroxyacyl]-alpha-D-glucosamine = a lipid A disaccharide + UDP + H(+). It participates in glycolipid biosynthesis; lipid IV(A) biosynthesis; lipid IV(A) from (3R)-3-hydroxytetradecanoyl-[acyl-carrier-protein] and UDP-N-acetyl-alpha-D-glucosamine: step 5/6. Condensation of UDP-2,3-diacylglucosamine and 2,3-diacylglucosamine-1-phosphate to form lipid A disaccharide, a precursor of lipid A, a phosphorylated glycolipid that anchors the lipopolysaccharide to the outer membrane of the cell. The sequence is that of Lipid-A-disaccharide synthase from Erwinia tasmaniensis (strain DSM 17950 / CFBP 7177 / CIP 109463 / NCPPB 4357 / Et1/99).